The primary structure comprises 201 residues: MARSSGPLCLLLLGGLVAGILSGASADGNGLPSKKLKMQYTAGPLLKFQICVSUGYRRVFEDYMRVISQRYPDIRIEGENYLPHPIYRNIASFLSVFKLVLIGLIIAGKDPFAFFGMQAPSVWQWGQENKVYACMMVFFVSNMIENQCMSTGAFEITLNDVPVWSKLESGHLPSVQQLVQIIDNEMKLNVHMDAIPHHHRS.

An N-terminal signal peptide occupies residues 1–26 (MARSSGPLCLLLLGGLVAGILSGASA). Positions 51–54 (CVSU) form a cross-link, cysteinyl-selenocysteine (Cys-Sec). Residue Sec-54 is a non-standard amino acid, selenocysteine. Residues 96 to 116 (VFKLVLIGLIIAGKDPFAFFG) traverse the membrane as a helical segment.

The protein belongs to the SelWTH family. Selenoprotein T subfamily. In terms of processing, may contain a selenide-sulfide bond between Cys-51 and Sec-54. This bond is speculated to serve as redox-active pair.

It is found in the endoplasmic reticulum membrane. It catalyses the reaction [thioredoxin]-dithiol + NADP(+) = [thioredoxin]-disulfide + NADPH + H(+). Its function is as follows. Selenoprotein with thioredoxin reductase-like oxidoreductase activity. The protein is Thioredoxin reductase-like selenoprotein T (selenot) of Xenopus tropicalis (Western clawed frog).